The following is a 507-amino-acid chain: Phytoene dehydrogenase (507 aa).

12–45 contacts FAD; that stretch reads VVVGAGLAGLAAALHLLGAGRRVTVVEREDVPGG.

This sequence belongs to the carotenoid/retinoid oxidoreductase family. Requires FAD as cofactor.

It functions in the pathway carotenoid biosynthesis; lycopene biosynthesis. Its function is as follows. This enzyme converts phytoene into zeta-carotene via the intermediary of phytofluene by the symmetrical introduction of two double bonds at the C-11 and C-11' positions of phytoene. In Streptomyces griseus, this protein is Phytoene dehydrogenase (crtI).